An 89-amino-acid chain; its full sequence is Large ribosomal subunit protein bL27 (89 aa).

The segment at 1-21 is disordered; that stretch reads MAHKKAGGSSRNGRDSESKRL.

The protein belongs to the bacterial ribosomal protein bL27 family.

The sequence is that of Large ribosomal subunit protein bL27 from Chelativorans sp. (strain BNC1).